A 468-amino-acid polypeptide reads, in one-letter code: COBRA-like protein 5 (468 aa).

Residues Met-1 to Ala-22 form the signal peptide. Residues Asn-31, Asn-156, Asn-164, and Asn-228 are each glycosylated (N-linked (GlcNAc...) asparagine). A disordered region spans residues Gly-251–Glu-278. 3 N-linked (GlcNAc...) asparagine glycosylation sites follow: Asn-340, Asn-355, and Asn-374. Residue Asn-443 is the site of GPI-anchor amidated asparagine attachment. The propeptide at Ser-444–Ala-468 is removed in mature form.

This sequence belongs to the COBRA family. As to expression, expressed mainly in developing sclerenchyma cells and in vascular bundles.

It is found in the cell membrane. Its function is as follows. Involved in determining the orientation of cell expansion, probably by playing an important role in cellulose deposition. May act by recruiting cellulose synthesizing complexes to discrete positions on the cell surface. The polypeptide is COBRA-like protein 5 (BC1) (Oryza sativa subsp. indica (Rice)).